We begin with the raw amino-acid sequence, 130 residues long: UPF0102 protein Cthe_0758 (130 aa).

It belongs to the UPF0102 family.

This Acetivibrio thermocellus (strain ATCC 27405 / DSM 1237 / JCM 9322 / NBRC 103400 / NCIMB 10682 / NRRL B-4536 / VPI 7372) (Clostridium thermocellum) protein is UPF0102 protein Cthe_0758.